A 597-amino-acid polypeptide reads, in one-letter code: Adenine deaminase (597 aa).

Belongs to the metallo-dependent hydrolases superfamily. Adenine deaminase family. The cofactor is Mn(2+).

It catalyses the reaction adenine + H2O + H(+) = hypoxanthine + NH4(+). This is Adenine deaminase from Paracoccus denitrificans (strain Pd 1222).